We begin with the raw amino-acid sequence, 116 residues long: Large ribosomal subunit protein bL17 (116 aa).

The protein belongs to the bacterial ribosomal protein bL17 family. As to quaternary structure, part of the 50S ribosomal subunit. Contacts protein L32.

This chain is Large ribosomal subunit protein bL17, found in Helicobacter pylori (strain J99 / ATCC 700824) (Campylobacter pylori J99).